A 334-amino-acid chain; its full sequence is MTPLLLLAVLCLGTALATPKFDQTFNAQWHQWKSTHRRLYGTNEEEWRRAVWEKNMRMIQLHNGEYSNGKHGFTMEMNAFGDMTNEEFRQIVNGYRHQKHKKGRLFQEPLMLQIPKTVDWREKGCVTPVKNQGQCGSCWAFSASGCLEGQMFLKTGKLISLSEQNLVDCSHDQGNQGCNGGLMDFAFQYIKENGGLDSEESYPYEAKDGSCKYRAEYAVANDTGFVDIPQQEKALMKAVATVGPISVAMDASHPSLQFYSSGIYYEPNCSSKDLDHGVLVVGYGYEGTDSNKDKYWLVKNSWGKEWGMDGYIKIAKDRNNHCGLATAASYPIVN.

An N-terminal signal peptide occupies residues 1 to 17 (MTPLLLLAVLCLGTALA). The propeptide at 18 to 113 (TPKFDQTFNA…RLFQEPLMLQ (96 aa)) is activation peptide. E122 serves as a coordination point for Zn(2+). Intrachain disulfides connect C135-C178 and C169-C211. Residue C138 is part of the active site. 9 residues coordinate Zn(2+): E163, D184, E199, E205, D227, D250, H253, D273, and D275. Residues C269 and C322 are joined by a disulfide bond. H276 is a catalytic residue. The propeptide occupies 289–290 (DS). N300 is a catalytic residue.

The protein belongs to the peptidase C1 family. As to quaternary structure, dimer of a heavy and a light chain linked by disulfide bonds. Interacts with Long isoform of CD74/Ii chain; the interaction stabilizes the conformation of mature CTSL. Post-translationally, during export along the endocytic pathway, pro-CTSL undergoes several proteolytic cleavages to generate the CTSL single-chain and two-chain mature forms, composed of a heavy chain linked to a light chain by disulfide bonds. Autocleavage; produces the single-chain CTSL after cleavage of the propeptide. The cleavage can be intermolecular. As to expression, both mature cathepsin L1 and procathepsin L are found in the upper epidermis. The lower epidermis predominantly contains procathepsin L. In seminiferous tubules expression is greater at stages VI-VII than at stages IX-XII.

Its subcellular location is the lysosome. It is found in the apical cell membrane. The protein localises to the cytoplasmic vesicle. The protein resides in the secretory vesicle. It localises to the chromaffin granule. Its subcellular location is the secreted. It is found in the extracellular space. It catalyses the reaction Specificity close to that of papain. As compared to cathepsin B, cathepsin L exhibits higher activity toward protein substrates, but has little activity on Z-Arg-Arg-NHMec, and no peptidyl-dipeptidase activity.. Inhibited by the propeptide produced by autocleavage. Long isoform of CD74/Ii chain stabilizes the conformation of mature CTSL by binding to its active site and serving as a chaperone to help maintain a pool of mature enzyme in endocytic compartments and extracellular space of APCs. IFNG enhances the conversion into the CTSL mature and active form. Inhibited by CST6. Inhibited by the glycopeptide antibiotic teicoplanin. Inhibited by amantadine. Functionally, thiol protease important for the overall degradation of proteins in lysosomes. Plays a critical for normal cellular functions such as general protein turnover, antigen processing and bone remodeling. Involved in the solubilization of cross-linked TG/thyroglobulin and in the subsequent release of thyroid hormone thyroxine (T4) by limited proteolysis of TG/thyroglobulin in the thyroid follicle lumen. In neuroendocrine chromaffin cells secretory vesicles, catalyzes the prohormone proenkephalin processing to the active enkephalin peptide neurotransmitter. In thymus, regulates CD4(+) T cell positive selection by generating the major histocompatibility complex class II (MHCII) bound peptide ligands presented by cortical thymic epithelial cells. Also mediates invariant chain processing in cortical thymic epithelial cells. Major elastin-degrading enzyme at neutral pH. Accumulates as a mature and active enzyme in the extracellular space of antigen presenting cells (APCs) to regulate degradation of the extracellular matrix in the course of inflammation. Secreted form generates endostatin from COL18A1. Critical for cardiac morphology and function. Plays an important role in hair follicle morphogenesis and cycling, as well as epidermal differentiation. Required for maximal stimulation of steroidogenesis by TIMP1. In Rattus norvegicus (Rat), this protein is Procathepsin L.